The sequence spans 339 residues: 5-dehydro-2-deoxygluconokinase (339 aa).

Belongs to the carbohydrate kinase PfkB family.

It catalyses the reaction 5-dehydro-2-deoxy-D-gluconate + ATP = 6-phospho-5-dehydro-2-deoxy-D-gluconate + ADP + H(+). The protein operates within polyol metabolism; myo-inositol degradation into acetyl-CoA; acetyl-CoA from myo-inositol: step 5/7. Functionally, catalyzes the phosphorylation of 5-dehydro-2-deoxy-D-gluconate (2-deoxy-5-keto-D-gluconate or DKG) to 6-phospho-5-dehydro-2-deoxy-D-gluconate (DKGP). In Clostridium beijerinckii (strain ATCC 51743 / NCIMB 8052) (Clostridium acetobutylicum), this protein is 5-dehydro-2-deoxygluconokinase.